The sequence spans 514 residues: MELGPEPPHRRRLFFACSPTPAPQPTGKMLFGASAAGGLSPVTNLTVTMDQLEGLGSDCEKMEVRNNSSLQRMGSSESTDSGFCLDSPGPLDSKENLEISLTRINSLPQKLLGCSPALKRSHSDSLDHDTFHLIDQDENKENEAFEFKKPIRPASRHIYEESKDPFTHRQNSAPARMLSSNESESGNFSPLFIPQSPVKATLSDEDDGFIDLLDGENMKNDEETPSCMASLWTAPLVMRRPANLADRCGLFDSPSPCGSSTRAVLKRADRSHEEPPRGTKRRKSVPSPVKAKADVPEPAQLPSQSLSLMSSPKGTIENILDSDPRDLIGDFSKGYLFNTVSGKHQDLKYISPEIMASVLNGKFAGLIKEFVIIDCRYPYEYEGGHIKGAVNLHMEEEVEDFLLKNPIVPTDGKRVIVVFHCEFSSERGPRMCRYVRERDRLGNEYPKLHYPELYVLKGGYKEFFLKCQSHCEPPSYRPMHHEDFKEDLKKFRTKSRTWAGEKSKREMYSRLKKL.

The short motif at 73 to 83 (MGSSESTDSGF) is the Phosphodegron element. Ser-75 carries the phosphoserine; by CHEK1 modification. A phosphoserine; by NEK11 mark is found at Ser-78, Ser-81, and Ser-87. The residue at position 106 (Ser-106) is a Phosphoserine. Residue Ser-123 is modified to Phosphoserine; by CHEK1 and CHEK2. Positions 140-142 (KEN) match the KEN box motif. Ser-172 carries the phosphoserine; by CHEK1 modification. Residues 256–308 (PCGSSTRAVLKRADRSHEEPPRGTKRRKSVPSPVKAKADVPEPAQLPSQSLSL) form a disordered region. Basic and acidic residues predominate over residues 266–277 (KRADRSHEEPPR). Phosphoserine; by CHEK1 and CHEK2 occurs at positions 271 and 284. A Phosphoserine modification is found at Ser-311. The Rhodanese domain occupies 366–472 (LIKEFVIIDC…FFLKCQSHCE (107 aa)). Residue Cys-421 is part of the active site. At Thr-497 the chain carries Phosphothreonine; by CHEK1. Phosphoserine; by PLK3 occurs at positions 503 and 509.

Belongs to the MPI phosphatase family. As to quaternary structure, interacts with CCNB1/cyclin B1. Interacts with YWHAE/14-3-3 epsilon when phosphorylated. Interacts with CUL1 specifically when CUL1 is neddylated and active. Interacts with BTRC/BTRCP1 and FBXW11/BTRCP2. Interactions with CUL1, BTRC and FBXW11 are enhanced upon DNA damage. Interacts with CHEK2; mediates CDC25A phosphorylation and degradation in response to infrared-induced DNA damages. Interacts with HSP90AB1; prevents heat shock-mediated CDC25A degradation and contributes to cell cycle progression. Phosphorylated by CHEK1 on Ser-75, Ser-123, Ser-172, Ser-271, Ser-284 and Thr-497 during checkpoint mediated cell cycle arrest. Also phosphorylated by CHEK2 on Ser-123, Ser-271, and Ser-284 during checkpoint mediated cell cycle arrest. Phosphorylation on Ser-172 and Thr-497 creates binding sites for YWHAE/14-3-3 epsilon which inhibits CDC25A. Phosphorylation on Ser-75, Ser-123, Ser-172, Ser-271 and Ser-284 may also promote ubiquitin-dependent proteolysis of CDC25A by the SCF complex. Phosphorylation of CDC25A at Ser-75 by CHEK1 primes it for subsequent phosphorylation at Ser-75, Ser-81 and Ser-87 by NEK11. Phosphorylation by NEK11 is required for BTRC-mediated polyubiquitination and degradation. Phosphorylation by PIM1 leads to an increase in phosphatase activity. Phosphorylated by PLK3 following DNA damage, leading to promote its ubiquitination and degradation. In terms of processing, ubiquitinated by the anaphase promoting complex/cyclosome (APC/C) ubiquitin ligase complex that contains FZR1/CDH1 during G1 phase leading to its degradation by the proteasome. Ubiquitinated by a SCF complex containing BTRC and FBXW11 during S phase leading to its degradation by the proteasome. Deubiquitination by USP17L2/DUB3 leads to its stabilization. As to expression, ubiquitously expressed in most developing tissue. High levels in the testis and lower levels in the ovary, particularly in germ cells. Lower levels also in kidney, liver, heart and muscle.

The enzyme catalyses O-phospho-L-tyrosyl-[protein] + H2O = L-tyrosyl-[protein] + phosphate. Stimulated by B-type cyclins. Stimulated by PIM1-mediated phosphorylation. Tyrosine protein phosphatase which functions as a dosage-dependent inducer of mitotic progression. Directly dephosphorylates CDK1 and stimulates its kinase activity. Also dephosphorylates CDK2 in complex with cyclin-E, in vitro. This Mus musculus (Mouse) protein is M-phase inducer phosphatase 1 (Cdc25a).